Here is a 255-residue protein sequence, read N- to C-terminus: Imidazole glycerol phosphate synthase subunit HisF (255 aa).

Catalysis depends on residues D12 and D131.

Belongs to the HisA/HisF family. As to quaternary structure, heterodimer of HisH and HisF.

Its subcellular location is the cytoplasm. The enzyme catalyses 5-[(5-phospho-1-deoxy-D-ribulos-1-ylimino)methylamino]-1-(5-phospho-beta-D-ribosyl)imidazole-4-carboxamide + L-glutamine = D-erythro-1-(imidazol-4-yl)glycerol 3-phosphate + 5-amino-1-(5-phospho-beta-D-ribosyl)imidazole-4-carboxamide + L-glutamate + H(+). Its pathway is amino-acid biosynthesis; L-histidine biosynthesis; L-histidine from 5-phospho-alpha-D-ribose 1-diphosphate: step 5/9. Its function is as follows. IGPS catalyzes the conversion of PRFAR and glutamine to IGP, AICAR and glutamate. The HisF subunit catalyzes the cyclization activity that produces IGP and AICAR from PRFAR using the ammonia provided by the HisH subunit. This chain is Imidazole glycerol phosphate synthase subunit HisF, found in Neisseria meningitidis serogroup C / serotype 2a (strain ATCC 700532 / DSM 15464 / FAM18).